We begin with the raw amino-acid sequence, 500 residues long: Galactofuranose transporter ATP-binding protein YtfR (500 aa).

ABC transporter domains follow at residues 10-245 (LRTE…LGRE) and 259-497 (LSDK…IMNA). 42-49 (GENGAGKS) provides a ligand contact to ATP.

It belongs to the ABC transporter superfamily. The complex is composed of two ATP-binding proteins (YtfR), two transmembrane proteins (YtfT and YjfF) and a solute-binding protein (YtfQ).

It is found in the cell inner membrane. The catalysed reaction is D-galactofuranose(out) + ATP + H2O = D-galactofuranose(in) + ADP + phosphate + H(+). In terms of biological role, part of the ABC transporter complex YtfQRT-YjfF involved in galactofuranose transport. Responsible for energy coupling to the transport system. This is Galactofuranose transporter ATP-binding protein YtfR (ytfR) from Escherichia coli O157:H7.